We begin with the raw amino-acid sequence, 223 residues long: Deoxyribose-phosphate aldolase (223 aa).

Asp91 (proton donor/acceptor) is an active-site residue. Lys153 functions as the Schiff-base intermediate with acetaldehyde in the catalytic mechanism. Lys182 acts as the Proton donor/acceptor in catalysis.

It belongs to the DeoC/FbaB aldolase family. DeoC type 1 subfamily.

The protein localises to the cytoplasm. It carries out the reaction 2-deoxy-D-ribose 5-phosphate = D-glyceraldehyde 3-phosphate + acetaldehyde. The protein operates within carbohydrate degradation; 2-deoxy-D-ribose 1-phosphate degradation; D-glyceraldehyde 3-phosphate and acetaldehyde from 2-deoxy-alpha-D-ribose 1-phosphate: step 2/2. Functionally, catalyzes a reversible aldol reaction between acetaldehyde and D-glyceraldehyde 3-phosphate to generate 2-deoxy-D-ribose 5-phosphate. This chain is Deoxyribose-phosphate aldolase, found in Streptococcus pyogenes serotype M1.